A 425-amino-acid polypeptide reads, in one-letter code: Histone-binding protein RBBP4-A (425 aa).

At Ala-2 the chain carries N-acetylalanine. WD repeat units follow at residues 32 to 125 (YDLV…THDG), 126 to 175 (EVNR…RLRG), 176 to 223 (HQKE…KTIF), 225 to 270 (GHTA…HSVD), 271 to 314 (AHTA…HSFE), 315 to 371 (SHKD…FIHG), and 372 to 404 (GHTAKISDFSWNPNEPWVICSVSEDNIMQVWQM).

Belongs to the WD repeat RBAP46/RBAP48/MSI1 family. In terms of assembly, binds directly to histone H4, probably via helix 1 of the histone fold, a region that is not accessible when histone H4 is in chromatin. Probably forms a large corepressor complex that contains ncor1, sin3a, hdac1-A and/or hdac1-B, hdac2, rbbp4-A and/or rbbp4-B and possibly rbbp7.

The protein resides in the nucleus. It is found in the chromosome. The protein localises to the telomere. Its function is as follows. Core histone-binding subunit that may target chromatin assembly factors, chromatin remodeling factors and histone deacetylases to their histone substrates in a manner that is regulated by nucleosomal DNA. Component of several complexes which regulate chromatin metabolism. The chain is Histone-binding protein RBBP4-A (rbbp4-a) from Xenopus laevis (African clawed frog).